Reading from the N-terminus, the 313-residue chain is Ornithine carbamoyltransferase (313 aa).

Carbamoyl phosphate-binding positions include 57–60 (STRT), Gln84, Arg108, and 135–138 (HPTQ). Residues Asn167, Asp231, and 235–236 (SM) contribute to the L-ornithine site. Residues 272-273 (CL) and Arg300 contribute to the carbamoyl phosphate site.

This sequence belongs to the aspartate/ornithine carbamoyltransferase superfamily. OTCase family.

It is found in the cytoplasm. The enzyme catalyses carbamoyl phosphate + L-ornithine = L-citrulline + phosphate + H(+). It functions in the pathway amino-acid biosynthesis; L-arginine biosynthesis; L-arginine from L-ornithine and carbamoyl phosphate: step 1/3. In terms of biological role, reversibly catalyzes the transfer of the carbamoyl group from carbamoyl phosphate (CP) to the N(epsilon) atom of ornithine (ORN) to produce L-citrulline. This is Ornithine carbamoyltransferase from Caldanaerobacter subterraneus subsp. tengcongensis (strain DSM 15242 / JCM 11007 / NBRC 100824 / MB4) (Thermoanaerobacter tengcongensis).